The chain runs to 430 residues: MAELTNHFNKVNELLNDWDGVGLSHELSMTELITSILNSINHNSHSGMSNQKKQQIQAKVNQIKKTDLVVKRQQDIDTLCANKIQHNYNEIVAYRLRSISSLLDSKYYDAFRYLIEAINSFVKVFELWSQNILWRLSLDLRLMAELATLNVGSNDSNNSNNNVTIDYFEEASRTLLSKCFQAANADRTPNLAESKKNAALGVVNQLFQIYFKINNLKLCKNLIKTMESPGFPTLESYPLNQVITYRFFNGRLSVFNGQYKKAQEELLYAFNKCPNDSIKNKRLILLFLVPMQLEQCKFPKKSLLEKFKLTQFIDIVQSIKSGNIKQFNECLSTHQNFFISKGIYLILEKLKIIVYRNLFKKVHLITTGQRIPIGNFVSALKWMENDAIDIDETECILSNLIYNGYLKGYISHKVALVVSPTNPFPKLPLN.

The PCI domain occupies 243-424; the sequence is ITYRFFNGRL…ALVVSPTNPF (182 aa).

Belongs to the CSN12 family.

In Dictyostelium discoideum (Social amoeba), this protein is PCI domain-containing protein 2 homolog (pcid2).